The chain runs to 87 residues: UPF0335 protein RHECIAT_CH0003797 (87 aa).

The protein belongs to the UPF0335 family.

In Rhizobium etli (strain CIAT 652), this protein is UPF0335 protein RHECIAT_CH0003797.